The following is a 453-amino-acid chain: Secreted exoenzyme S (453 aa).

The region spanning 96-229 (SSAVVFKQMV…LRQAVESEVS (134 aa)) is the Bacterial Rho-GAP domain. Positions 239 to 414 (DGLVKRFGAD…RVLEEAALGE (176 aa)) constitute a TR mART core domain. Active-site residues include Arg-319, Ser-343, and Glu-381.

It is found in the secreted. It catalyses the reaction L-arginyl-[protein] + NAD(+) = N(omega)-(ADP-D-ribosyl)-L-arginyl-[protein] + nicotinamide + H(+). Its function is as follows. Bifunctional effector protein that is secreted and delivered by the type III secretion system into eukaryotic target cells. ADP-ribosylates several eukaryotic proteins including ezrin/radixin/moesin (ERM), cyclophilin A and several members of the Ras superfamily. Host Ras ADP-ribosylation blocks its activation by its guanine nucleotide exchange factor, thereby interfering with Ras-mediated signal transduction. For instance, prevents Ras from interacting with and activating phosphoinositol-3-kinase (PI3K), which is required to stimulate the phagocytic NADPH-oxidase that generates reactive oxygen species. The TR mART core domain also contributes to bacterial dissemination to the blood during pneumonia. In addition to this activity, acts via its N-terminal region as a GTPase-activating protein (GAP) for host Rho GTPases including RhoA, Rac1, Cdc42 and Ras. The bacterial Rho-GAP domain activity induces mitochondrial disruption in the target host cell by activating host caspases 3 and 9 that execute cellular death. The sequence is that of Secreted exoenzyme S (exoS) from Pseudomonas aeruginosa (strain ATCC 15692 / DSM 22644 / CIP 104116 / JCM 14847 / LMG 12228 / 1C / PRS 101 / PAO1).